The primary structure comprises 154 residues: 17 kDa A-type inclusion protein (154 aa).

The stretch at 17–85 forms a coiled coil; that stretch reads QKDCSDKLDR…YKRELERDRY (69 aa). The tract at residues 88–154 is disordered; that stretch reads SRYLTSSSDP…DVEPEHPPAF (67 aa).

This Bos taurus (Bovine) protein is 17 kDa A-type inclusion protein.